A 121-amino-acid polypeptide reads, in one-letter code: Large ribosomal subunit protein uL18 (121 aa).

Belongs to the universal ribosomal protein uL18 family. Part of the 50S ribosomal subunit; part of the 5S rRNA/L5/L18/L25 subcomplex. Contacts the 5S and 23S rRNAs.

This is one of the proteins that bind and probably mediate the attachment of the 5S RNA into the large ribosomal subunit, where it forms part of the central protuberance. The protein is Large ribosomal subunit protein uL18 of Caldanaerobacter subterraneus subsp. tengcongensis (strain DSM 15242 / JCM 11007 / NBRC 100824 / MB4) (Thermoanaerobacter tengcongensis).